Reading from the N-terminus, the 1010-residue chain is Outer kinetochore KNL1 complex subunit knl-1 (1010 aa).

9 consecutive repeat copies span residues 85 to 88 (MDIS), 109 to 112 (MDMS), 228 to 231 (MDTS), 255 to 258 (MDIT), 278 to 281 (MDIS), 323 to 326 (MDIT), 346 to 349 (MDIS), 402 to 405 (MDIT), and 428 to 431 (MDIS). The tract at residues 85–431 (MDISESPACT…LQKEDLMDIS (347 aa)) is 9 X 4 AA repeats of M-[D/E]-[I/L/M]-[S/T]. Coiled coils occupy residues 820 to 915 (RIVE…GLDK) and 956 to 988 (KALRNVRSNMIALRSEKNALEMKVAEEHEKFAQ).

Component of the KNL1 complex composed of knl-1 and kbp-5. Part of the ten-subunit outer kinetochore KMN network that includes the KNL1, MIS12 and NDC80 complexes. Interacts with the protein phosphatase 1 (PP1) catalytic subunit gsp-1; the interaction is direct. Interacts with the protein phosphatase 1 (PP1) catalytic subunit gsp-2; the interaction is direct. Interacts with the MIS12 complex subunits kbp-1, kbp-2 and mis-12. Interacts with the NDC80 complex components ndc-80 and him-10. Interacts with knl-3. Interacts with kbp-3. Interacts with kbp-4. Interacts with kbp-5.

The protein localises to the cytoplasm. It is found in the cell cortex. Its subcellular location is the chromosome. It localises to the centromere. The protein resides in the kinetochore. Functionally, acts as a component of the outer kinetochore KNL1 complex that serves as a docking point for spindle assembly checkpoint components and mediates microtubule-kinetochore interactions. Kinetochores, consisting of a centromere-associated inner segment and a microtubule-contacting outer segment, play a crucial role in chromosome segregation by mediating the physical connection between centromeric DNA and spindle microtubules. The outer kinetochore is made up of the ten-subunit KMN network, comprising the MIS12, NDC80 and KNL1 complexes, and auxiliary microtubule-associated components; together they connect the outer kinetochore with the inner kinetochore, bind microtubules, and mediate interactions with mitotic checkpoint proteins that delay anaphase until chromosomes are bioriented on the spindle. Binds the protein phosphatase 1 catalytic subunits gsp-1 and gsp-2, which has a role in delaying formation of load-bearing kinetochore-microtubule attachments. Required for the recruitment of spindle-assembly checkpoint components bub-1 and mdf-1/2 to unattached kinetochores. Binds microtubules which plays a role in silencing of the spindle assembly checkpoint, but not the formation of load-bearing microtubule-kinetochore attachments. Has a role in the correct localization of the spindly-like protein spdl-1 and the RZZ complex that is composed of rod-1, czw-1 and zwl-1 to kinetochores. This is Outer kinetochore KNL1 complex subunit knl-1 (knl-1) from Caenorhabditis elegans.